The primary structure comprises 179 residues: ATP synthase subunit delta (179 aa).

This sequence belongs to the ATPase delta chain family. In terms of assembly, F-type ATPases have 2 components, F(1) - the catalytic core - and F(0) - the membrane proton channel. F(1) has five subunits: alpha(3), beta(3), gamma(1), delta(1), epsilon(1). F(0) has three main subunits: a(1), b(2) and c(10-14). The alpha and beta chains form an alternating ring which encloses part of the gamma chain. F(1) is attached to F(0) by a central stalk formed by the gamma and epsilon chains, while a peripheral stalk is formed by the delta and b chains.

The protein localises to the cell membrane. F(1)F(0) ATP synthase produces ATP from ADP in the presence of a proton or sodium gradient. F-type ATPases consist of two structural domains, F(1) containing the extramembraneous catalytic core and F(0) containing the membrane proton channel, linked together by a central stalk and a peripheral stalk. During catalysis, ATP synthesis in the catalytic domain of F(1) is coupled via a rotary mechanism of the central stalk subunits to proton translocation. Its function is as follows. This protein is part of the stalk that links CF(0) to CF(1). It either transmits conformational changes from CF(0) to CF(1) or is implicated in proton conduction. This is ATP synthase subunit delta from Clostridium botulinum (strain Loch Maree / Type A3).